The chain runs to 399 residues: MERAGARGQRCGRRSHGLPLALRLALLLAGSPSGRAGAPEEQEIAGSGTVAPAGGDRCRGYYDVMGQWDPPFNCSSGVYSFCCGTCGYRFCCHDGPRRLDQSRCSNYDTPAWVQTGRPPARARDTAAPRDPARERSHTAVYAVCGVAALLVLVGIGARLGLERAHSPRARRTVTRTLTELLKQPGPQEPLPPPLGPPLGNCVQVQMGDGVLRGSPHNSTDKKRLNNAPLGSATPGPPRGPRLQGGGSLTLQPDYAKFATLKAAALKATEVAPQDFYQRFPSTETGPRTLPARVPRPPEDLPALLDACPWAPPGYVPPAGPVSSVPYAAWTAGRPARPLPRSHLVAQVSPAPRRPNHAPRRQFSVEKLPEAFSAQQASFYSSAGRGPRHLSTNSKAEVTV.

A signal peptide spans 1 to 36; that stretch reads MERAGARGQRCGRRSHGLPLALRLALLLAGSPSGRA. Topologically, residues 37–136 are extracellular; that stretch reads GAPEEQEIAG…APRDPARERS (100 aa). Asn-73 carries an N-linked (GlcNAc...) asparagine glycan. Residues 137–157 form a helical membrane-spanning segment; sequence HTAVYAVCGVAALLVLVGIGA. The Cytoplasmic portion of the chain corresponds to 158 to 399; it reads RLGLERAHSP…STNSKAEVTV (242 aa). Disordered regions lie at residues 207-248 and 378-399; these read GDGV…GGSL and FYSS…EVTV. Residues 389–399 are compositionally biased toward polar residues; the sequence is LSTNSKAEVTV.

Belongs to the shisa family. As to quaternary structure, interacts with AMPAR subunits GRIA1 and GRIA2. In terms of tissue distribution, brain-specific. Highly expressed in cerebellum and olfactory bulb.

It localises to the membrane. Functionally, may regulate trafficking and current kinetics of AMPA-type glutamate receptor (AMPAR) at synapses. The protein is Protein shisa-8 of Mus musculus (Mouse).